Reading from the N-terminus, the 452-residue chain is Mitochondrial distribution and morphology protein 10 (452 aa).

This sequence belongs to the MDM10 family. As to quaternary structure, component of the ER-mitochondria encounter structure (ERMES) or MDM complex, composed of MMM1, MDM10, MDM12 and MDM34. Associates with the mitochondrial outer membrane sorting assembly machinery SAM(core) complex.

Its subcellular location is the mitochondrion outer membrane. In terms of biological role, component of the ERMES/MDM complex, which serves as a molecular tether to connect the endoplasmic reticulum and mitochondria. Components of this complex are involved in the control of mitochondrial shape and protein biogenesis and may function in phospholipid exchange. MDM10 is involved in the late assembly steps of the general translocase of the mitochondrial outer membrane (TOM complex). Functions in the TOM40-specific route of the assembly of outer membrane beta-barrel proteins, including the association of TOM40 with the receptor TOM22 and small TOM proteins. Can associate with the SAM(core) complex as well as the MDM12-MMM1 complex, both involved in late steps of the major beta-barrel assembly pathway, that is responsible for biogenesis of all outer membrane beta-barrel proteins. May act as a switch that shuttles between both complexes and channels precursor proteins into the TOM40-specific pathway. Plays a role in mitochondrial morphology and in the inheritance of mitochondria. The sequence is that of Mitochondrial distribution and morphology protein 10 from Kluyveromyces lactis (strain ATCC 8585 / CBS 2359 / DSM 70799 / NBRC 1267 / NRRL Y-1140 / WM37) (Yeast).